The sequence spans 292 residues: Chronophin (292 aa).

Catalysis depends on Asp-25, which acts as the Nucleophile. Asp-25 and Asp-27 together coordinate Mg(2+). The active-site Proton donor is Asp-27. Residues Ser-58–Asn-60, His-178, and Lys-209 each bind substrate. Asp-234 lines the Mg(2+) pocket.

This sequence belongs to the HAD-like hydrolase superfamily. Homodimer. Requires Mg(2+) as cofactor. In terms of tissue distribution, ubiquitous. highly expressed in brain (at protein level).

Its subcellular location is the cytoplasm. The protein resides in the cytosol. It is found in the cytoskeleton. The protein localises to the cell projection. It localises to the ruffle membrane. Its subcellular location is the lamellipodium membrane. The protein resides in the cell membrane. It catalyses the reaction pyridoxal 5'-phosphate + H2O = pyridoxal + phosphate. The catalysed reaction is pyridoxine 5'-phosphate + H2O = pyridoxine + phosphate. It carries out the reaction pyridoxamine + phosphate = pyridoxamine 5'-phosphate + H2O. The enzyme catalyses O-phospho-L-seryl-[protein] + H2O = L-seryl-[protein] + phosphate. Its activity is regulated as follows. Inhibited by beryllium trifluoride. Its function is as follows. Functions as a pyridoxal phosphate (PLP) phosphatase, which also catalyzes the dephosphorylation of pyridoxine 5'-phosphate (PNP) and pyridoxamine 5'-phosphate (PMP), with order of substrate preference PLP &gt; PNP &gt; PMP and therefore plays a role in vitamin B6 metabolism. Also functions as a protein serine phosphatase that specifically dephosphorylates 'Ser-3' in proteins of the actin-depolymerizing factor (ADF)/cofilin family like CFL1 and DSTN. Thereby, regulates cofilin-dependent actin cytoskeleton reorganization, being required for normal progress through mitosis and normal cytokinesis. Does not dephosphorylate phosphothreonines in LIMK1. Does not dephosphorylate peptides containing phosphotyrosine. This is Chronophin from Mus musculus (Mouse).